The following is a 103-amino-acid chain: Defensin-like protein 289 (103 aa).

Positions 1–29 are cleaved as a signal peptide; the sequence is MATLKTTIFIIFILYISCTMFVNIFRVQA. Disulfide bonds link Cys-33–Cys-50, Cys-39–Cys-55, Cys-43–Cys-57, Cys-72–Cys-92, Cys-78–Cys-98, and Cys-84–Cys-100.

The protein belongs to the DEFL family.

The protein localises to the secreted. In Arabidopsis thaliana (Mouse-ear cress), this protein is Defensin-like protein 289.